A 952-amino-acid chain; its full sequence is uncharacterized protein (952 aa).

The CheB-type methylesterase domain maps to Met-1–Arg-141. Positions Val-168–Leu-440 constitute a CheR-type methyltransferase domain. The segment covering His-923–Gly-935 has biased composition (polar residues). The interval His-923–Ala-952 is disordered. A compositionally biased stretch (gly residues) spans Gly-936–Ala-952.

This is an uncharacterized protein from Rhodobacter capsulatus (Rhodopseudomonas capsulata).